The primary structure comprises 781 residues: Phenylalanine--tRNA ligase beta subunit (781 aa).

A tRNA-binding domain is found at 39 to 147; it reads APPFNDVVVA…DDAPVGEDLR (109 aa). The B5 domain maps to 398–473; sequence PRREPIELRL…RLFGYDRIPA (76 aa). Mg(2+) contacts are provided by aspartate 451, aspartate 457, glutamate 460, and glutamate 461. The region spanning 687 to 780 is the FDX-ACB domain; that stretch reads SRFPQVRRDL…AARRCSATLR (94 aa).

It belongs to the phenylalanyl-tRNA synthetase beta subunit family. Type 1 subfamily. In terms of assembly, tetramer of two alpha and two beta subunits. The cofactor is Mg(2+).

The protein localises to the cytoplasm. It catalyses the reaction tRNA(Phe) + L-phenylalanine + ATP = L-phenylalanyl-tRNA(Phe) + AMP + diphosphate + H(+). The chain is Phenylalanine--tRNA ligase beta subunit from Thiobacillus denitrificans (strain ATCC 25259 / T1).